Reading from the N-terminus, the 288-residue chain is Energy-coupling factor transporter ATP-binding protein EcfA2 (288 aa).

The 244-residue stretch at isoleucine 3–glycine 246 folds into the ABC transporter domain. An ATP-binding site is contributed by glycine 40–serine 47. Glutamate 171 serves as the catalytic Proton acceptor.

It belongs to the ABC transporter superfamily. Energy-coupling factor EcfA family. Forms a stable energy-coupling factor (ECF) transporter complex probably composed of 2 membrane-embedded substrate-binding proteins (S component), 2 ATP-binding proteins (A component) and 2 transmembrane proteins (T component). This complex interacts with a number of substrate-specific components, including FolT and ThiT for 5-formyltetrahydrofolate and thiamine respectively.

It localises to the cell membrane. ATP-binding (A) component of a common energy-coupling factor (ECF) ABC-transporter complex. Unlike classic ABC transporters this ECF transporter provides the energy necessary to transport a number of different substrates including 5-formyltetrahydrofolate and thiamine. Expression of the complex plus FolT or ThiT in Lactococcus lactis subsp. cremoris (strain NZ9000) allows 5-formyltetrahydrofolate or thiamine uptake respectively; 5-formyltetrahydrofolate or thiamine are not taken up in the absence of FolT/ThiT or the EcfA1A2T complex. Deenergized L.lactis subsp. cremoris (treated with 2-deoxyglucose) do not take up substrate. The sequence is that of Energy-coupling factor transporter ATP-binding protein EcfA2 from Lacticaseibacillus paracasei (strain ATCC 334 / BCRC 17002 / CCUG 31169 / CIP 107868 / KCTC 3260 / NRRL B-441) (Lactobacillus paracasei).